A 137-amino-acid polypeptide reads, in one-letter code: Protein cornichon homolog 4 (137 aa).

A run of 3 helical transmembrane segments spans residues 8–28, 53–73, and 113–133; these read LISF…LVCL, FIVQ…FMTL, and LAYI…SALD.

It belongs to the cornichon family.

Its subcellular location is the membrane. This is Protein cornichon homolog 4 from Arabidopsis thaliana (Mouse-ear cress).